We begin with the raw amino-acid sequence, 430 residues long: 3-phosphoshikimate 1-carboxyvinyltransferase (430 aa).

Positions 21, 22, and 26 each coordinate 3-phosphoshikimate. Position 21 (Lys21) interacts with phosphoenolpyruvate. Residues Gly92 and Arg120 each coordinate phosphoenolpyruvate. Residues Ser165, Ser166, Gln167, Ser193, Asp314, and Lys341 each coordinate 3-phosphoshikimate. Gln167 contacts phosphoenolpyruvate. Asp314 functions as the Proton acceptor in the catalytic mechanism. The phosphoenolpyruvate site is built by Arg345, Arg386, and Lys411.

This sequence belongs to the EPSP synthase family. Monomer.

The protein resides in the cytoplasm. It catalyses the reaction 3-phosphoshikimate + phosphoenolpyruvate = 5-O-(1-carboxyvinyl)-3-phosphoshikimate + phosphate. It participates in metabolic intermediate biosynthesis; chorismate biosynthesis. Its function is as follows. Catalyzes the transfer of the enolpyruvyl moiety of phosphoenolpyruvate (PEP) to the 5-hydroxyl of shikimate-3-phosphate (S3P) to produce enolpyruvyl shikimate-3-phosphate and inorganic phosphate. In Methanospirillum hungatei JF-1 (strain ATCC 27890 / DSM 864 / NBRC 100397 / JF-1), this protein is 3-phosphoshikimate 1-carboxyvinyltransferase.